Consider the following 133-residue polypeptide: Small ribosomal subunit protein uS19 (133 aa).

Belongs to the universal ribosomal protein uS19 family.

In terms of biological role, protein S19 forms a complex with S13 that binds strongly to the 16S ribosomal RNA. The polypeptide is Small ribosomal subunit protein uS19 (Thermococcus sibiricus (strain DSM 12597 / MM 739)).